An 82-amino-acid chain; its full sequence is UPF0291 protein LVIS_1359 (82 aa).

This sequence belongs to the UPF0291 family.

The protein localises to the cytoplasm. This Levilactobacillus brevis (strain ATCC 367 / BCRC 12310 / CIP 105137 / JCM 1170 / LMG 11437 / NCIMB 947 / NCTC 947) (Lactobacillus brevis) protein is UPF0291 protein LVIS_1359.